Reading from the N-terminus, the 650-residue chain is Chaperone protein HtpG (650 aa).

The segment at 1 to 349 (MSKTVKKFET…SSDLPLNVSR (349 aa)) is a; substrate-binding. The segment at 350 to 566 (EILQEDVQIK…EHGLNANMER (217 aa)) is b. The segment at 567 to 650 (ILRAMNQTVP…VADGKAAAGE (84 aa)) is c.

This sequence belongs to the heat shock protein 90 family. As to quaternary structure, homodimer.

It localises to the cytoplasm. Functionally, molecular chaperone. Has ATPase activity. This is Chaperone protein HtpG from Geobacter sulfurreducens (strain ATCC 51573 / DSM 12127 / PCA).